A 203-amino-acid polypeptide reads, in one-letter code: MANYQDITFALAGVCQAAKLVQQLAMNGTVDQEILRTGLSTLLQTAPEDTLAVYGGQKSNLKLGLETLMEQLNGSDVTLNRYWLGLLALEGKLHKNAQAKSELARRIQYLPTQLAHYDLLDEQMLSTLASIYVDVISPLGARIQVQGSPLYLQQLMTQNRIRACLLTGIRSAVLWRQVGGTKWQFLFSRRKLVATAQQIYSSI.

This sequence belongs to the HflD family.

It localises to the cytoplasm. It is found in the cell inner membrane. The sequence is that of High frequency lysogenization protein HflD homolog from Histophilus somni (strain 2336) (Haemophilus somnus).